The sequence spans 316 residues: Transaldolase (316 aa).

Residue lysine 127 is the Schiff-base intermediate with substrate of the active site.

The protein belongs to the transaldolase family. Type 2 subfamily.

Its subcellular location is the cytoplasm. The catalysed reaction is D-sedoheptulose 7-phosphate + D-glyceraldehyde 3-phosphate = D-erythrose 4-phosphate + beta-D-fructose 6-phosphate. It participates in carbohydrate degradation; pentose phosphate pathway; D-glyceraldehyde 3-phosphate and beta-D-fructose 6-phosphate from D-ribose 5-phosphate and D-xylulose 5-phosphate (non-oxidative stage): step 2/3. In terms of biological role, transaldolase is important for the balance of metabolites in the pentose-phosphate pathway. The polypeptide is Transaldolase (tal) (Helicobacter pylori (strain ATCC 700392 / 26695) (Campylobacter pylori)).